The sequence spans 538 residues: Bifunctional purine biosynthesis protein PurH (538 aa).

The MGS-like domain maps to 8 to 158; it reads IPAPDKVEIK…KNHAYVTILT (151 aa).

It belongs to the PurH family.

The enzyme catalyses (6R)-10-formyltetrahydrofolate + 5-amino-1-(5-phospho-beta-D-ribosyl)imidazole-4-carboxamide = 5-formamido-1-(5-phospho-D-ribosyl)imidazole-4-carboxamide + (6S)-5,6,7,8-tetrahydrofolate. It carries out the reaction IMP + H2O = 5-formamido-1-(5-phospho-D-ribosyl)imidazole-4-carboxamide. Its pathway is purine metabolism; IMP biosynthesis via de novo pathway; 5-formamido-1-(5-phospho-D-ribosyl)imidazole-4-carboxamide from 5-amino-1-(5-phospho-D-ribosyl)imidazole-4-carboxamide (10-formyl THF route): step 1/1. It participates in purine metabolism; IMP biosynthesis via de novo pathway; IMP from 5-formamido-1-(5-phospho-D-ribosyl)imidazole-4-carboxamide: step 1/1. This is Bifunctional purine biosynthesis protein PurH from Rhizobium etli (strain CIAT 652).